A 142-amino-acid chain; its full sequence is Hydrogenase maturation factor HypA (142 aa).

His2 lines the Ni(2+) pocket. 4 residues coordinate Zn(2+): Cys73, Cys76, Cys109, and Cys112.

The protein belongs to the HypA/HybF family.

In terms of biological role, involved in the maturation of [NiFe] hydrogenases. Required for nickel insertion into the metal center of the hydrogenase. The chain is Hydrogenase maturation factor HypA from Methanopyrus kandleri (strain AV19 / DSM 6324 / JCM 9639 / NBRC 100938).